The chain runs to 487 residues: Protein Optix (487 aa).

A DNA-binding region (homeobox) is located at residues 154–214; the sequence is WDGEQKTHCF…KNRRQRDRAA (61 aa). Disordered stretches follow at residues 182 to 330 and 443 to 463; these read NPTK…GAGP and ASVGGGGGNQHHEPTTTGYHH. The segment covering 255–277 has biased composition (polar residues); the sequence is GTHSPVPSSLQLQHSPGSTSNGA. A compositionally biased stretch (basic and acidic residues) spans 278–293; the sequence is NDREESLSVDDDKPRD. Positions 294–312 are enriched in low complexity; sequence LSGSLPLPLSLPLPLASPT. Over residues 321 to 330 the composition is skewed to gly residues; that stretch reads GYGGGAGAGP.

Belongs to the SIX/Sine oculis homeobox family. As to expression, expressed during early development of the head. First expressed in a band around the anterior end of stage 5 blastoderm embryo, at 93% to 85% egg length. By gastrula stage, site of expression shifts to the dorsal-anterior region. At stage 12, expression is found in the clypeolabrum, the stomodaeum, and in ectoderm dorsal to the future supraesophageal ganglion.

The protein localises to the nucleus. Functionally, may be involved in head or eye development; development of the clypeolabrum and several head sensory organs. The chain is Protein Optix (Optix) from Drosophila melanogaster (Fruit fly).